The sequence spans 363 residues: NAD(P)H-quinone oxidoreductase subunit 1, chloroplastic (363 aa).

6 helical membrane-spanning segments follow: residues 27-47 (IWLF…VLVI), 98-118 (FSIG…VIPF), 127-147 (LSIG…GLLM), 248-268 (YSGI…LVSS), 300-320 (VFGT…FLFI), and 336-356 (LLNL…LLTT).

Belongs to the complex I subunit 1 family. In terms of assembly, NDH is composed of at least 16 different subunits, 5 of which are encoded in the nucleus.

The protein localises to the plastid. The protein resides in the chloroplast thylakoid membrane. It carries out the reaction a plastoquinone + NADH + (n+1) H(+)(in) = a plastoquinol + NAD(+) + n H(+)(out). The catalysed reaction is a plastoquinone + NADPH + (n+1) H(+)(in) = a plastoquinol + NADP(+) + n H(+)(out). Functionally, NDH shuttles electrons from NAD(P)H:plastoquinone, via FMN and iron-sulfur (Fe-S) centers, to quinones in the photosynthetic chain and possibly in a chloroplast respiratory chain. The immediate electron acceptor for the enzyme in this species is believed to be plastoquinone. Couples the redox reaction to proton translocation, and thus conserves the redox energy in a proton gradient. In Amborella trichopoda, this protein is NAD(P)H-quinone oxidoreductase subunit 1, chloroplastic.